Consider the following 209-residue polypeptide: MRILFIIIQLTLILSACAYQQGKQGQNVEKESTRQQETKPIHVKDTTQETKDNGTRTDIAKHLVSVAEKNPDVKDATAVVLGGYAVVGIDVDDTLDRSKVETIKYSVAQALKNDRYGANAVVIADPDTVSRLREMSREISEGHPVTGILDELAAIVGRVLPEVPNDVIDNEDEPQTKQQNDQLNRKQQQEMEKEQNDQSDHHMKKNNND.

An N-terminal signal peptide occupies residues methionine 1–alanine 16. Cysteine 17 is lipidated: N-palmitoyl cysteine. Cysteine 17 is lipidated: S-diacylglycerol cysteine. 2 disordered regions span residues glutamine 26–glycine 54 and asparagine 165–aspartate 209. Composition is skewed to basic and acidic residues over residues valine 28–glycine 54 and leucine 183–aspartate 209.

The protein localises to the forespore inner membrane. Functionally, probably contributes, directly or indirectly, to early events in germination. This Bacillus subtilis (strain 168) protein is Probable spore germination lipoprotein YlaJ (ylaJ).